A 120-amino-acid chain; its full sequence is Ribosome-binding factor A (120 aa).

This sequence belongs to the RbfA family. Monomer. Binds 30S ribosomal subunits, but not 50S ribosomal subunits or 70S ribosomes.

The protein resides in the cytoplasm. Functionally, one of several proteins that assist in the late maturation steps of the functional core of the 30S ribosomal subunit. Associates with free 30S ribosomal subunits (but not with 30S subunits that are part of 70S ribosomes or polysomes). Required for efficient processing of 16S rRNA. May interact with the 5'-terminal helix region of 16S rRNA. The protein is Ribosome-binding factor A of Rickettsia peacockii (strain Rustic).